The following is a 517-amino-acid chain: Optineurin (517 aa).

2 coiled-coil regions span residues 15–127 and 174–453; these read NLGS…DLVA and KAES…LGRH. 2 disordered regions span residues 216 to 237 and 454 to 488; these read KLEH…TNAS and SMSE…WQQQ. Polar residues predominate over residues 222–237; the sequence is SSAQTSLPSAAETNAS. The CCHC NOA-type zinc-finger motif lies at 487-517; the sequence is QQNIPDHACPKCGEVLPDLDSLQIHIMDCII. Residues Cys495, Cys498, His511, and Cys515 each contribute to the Zn(2+) site.

It localises to the cytoplasm. Its subcellular location is the perinuclear region. It is found in the golgi apparatus. The protein localises to the trans-Golgi network. The protein resides in the cytoplasmic vesicle. It localises to the recycling endosome. Its subcellular location is the autophagosome. Functionally, probably part of the TNF-alpha signaling pathway that can shift the equilibrium toward induction of cell death. May act by regulating membrane trafficking and cellular morphogenesis. This Danio rerio (Zebrafish) protein is Optineurin (optn).